The primary structure comprises 530 residues: Pentatricopeptide repeat-containing protein At5g56310 (530 aa).

10 PPR repeats span residues 77–114, 115–149, 150–180, 181–211, 214–248, 249–283, 284–314, 315–349, 350–380, and 386–420; these read NTYLHNTMIRALSLLDEPNAHSIAITVYRKLWALCAKP, DTFTFPFVLKIAVRVSDVWFGRQIHGQVVVFGFDS, SVHVVTGLIQMYFSCGGLGDARKMFDEMLVK, DVNVWNALLAGYGKVGEMDEARSLLEMMPCW, NEVSWTCVISGYAKSGRASEAIEVFQRMLMENVEP, DEVTLLAVLSACADLGSLELGERICSYVDHRGMNR, AVSLNNAVIDMYAKSGNITKALDVFECVNER, NVVTWTTIIAGLATHGHGAEALAMFNRMVKAGVRP, NDVTFIAILSACSHVGWVDLGKRLFNSMRSK, and NIEHYGCMIDLLGRAGKLREADEVIKSMPFKANAA. The interval 421 to 496 is type E motif; the sequence is IWGSLLAASN…MAGESSIEVE (76 aa). Positions 497-527 are type E(+) motif; the sequence is NRVYKFISGDLTHPQVERIHEILQEMDLQIQ.

This sequence belongs to the PPR family. PCMP-E subfamily.

The sequence is that of Pentatricopeptide repeat-containing protein At5g56310 (PCMP-E13) from Arabidopsis thaliana (Mouse-ear cress).